A 317-amino-acid polypeptide reads, in one-letter code: Acetyl-coenzyme A carboxylase carboxyl transferase subunit alpha (317 aa).

Residues 40–293 form the CoA carboxyltransferase C-terminal domain; the sequence is LEGRVRDAMM…GTVIADALKE (254 aa).

The protein belongs to the AccA family. Acetyl-CoA carboxylase is a heterohexamer composed of biotin carboxyl carrier protein (AccB), biotin carboxylase (AccC) and two subunits each of ACCase subunit alpha (AccA) and ACCase subunit beta (AccD).

The protein localises to the cytoplasm. It carries out the reaction N(6)-carboxybiotinyl-L-lysyl-[protein] + acetyl-CoA = N(6)-biotinyl-L-lysyl-[protein] + malonyl-CoA. The protein operates within lipid metabolism; malonyl-CoA biosynthesis; malonyl-CoA from acetyl-CoA: step 1/1. Its function is as follows. Component of the acetyl coenzyme A carboxylase (ACC) complex. First, biotin carboxylase catalyzes the carboxylation of biotin on its carrier protein (BCCP) and then the CO(2) group is transferred by the carboxyltransferase to acetyl-CoA to form malonyl-CoA. The protein is Acetyl-coenzyme A carboxylase carboxyl transferase subunit alpha of Sinorhizobium fredii (strain NBRC 101917 / NGR234).